The chain runs to 330 residues: Serpentine receptor class J-38 (330 aa).

7 helical membrane passes run I6 to V26, L43 to I63, L98 to Y118, L135 to A155, T200 to L220, I253 to I273, and G285 to F305.

It belongs to the nematode receptor-like protein srj family.

It localises to the membrane. The protein is Serpentine receptor class J-38 (srj-38) of Caenorhabditis elegans.